The chain runs to 148 residues: Snaclec 4 (148 aa).

Positions 1–23 (MGRFIFVSFSLLVVFFSLSGTEA) are cleaved as a signal peptide. The C-type lectin domain occupies 34–148 (YDQNCYKAFE…DTQFRLQEPG (115 aa)).

This sequence belongs to the snaclec family. In terms of assembly, heterodimer; disulfide-linked. Contains disulfide bonds. Expressed by the venom gland.

Its subcellular location is the secreted. In terms of biological role, interferes with one step of hemostasis (modulation of platelet aggregation, or coagulation cascade, for example). In Echis pyramidum leakeyi (Leakey's carpet viper), this protein is Snaclec 4.